A 346-amino-acid polypeptide reads, in one-letter code: Galanin receptor type 1 (346 aa).

Over 1 to 33 (MELAPVNLSEGNGSDPEPPAEPRPLFGIGVENF) the chain is Extracellular. N-linked (GlcNAc...) asparagine glycans are attached at residues Asn7 and Asn12. The helical transmembrane segment at 34 to 54 (ITLVVFGLIFAMGVLGNSLVI) threads the bilayer. Residues 55–69 (TVLARSKPGKPRSTT) are Cytoplasmic-facing. A helical transmembrane segment spans residues 70–90 (NLFILNLSIADLAYLLFCIPF). Residues 91–108 (QATVYALPTWVLGAFICK) lie on the Extracellular side of the membrane. A disulfide bridge links Cys107 with Cys185. Residues 109-130 (FIHYFFTVSMLVSIFTLAAMSV) traverse the membrane as a helical segment. Over 131 to 150 (DRYVAIVHSRRSSSLRVSRN) the chain is Cytoplasmic. The helical transmembrane segment at 151–171 (ALLGVGFIWALSIAMASPVAY) threads the bilayer. The Extracellular portion of the chain corresponds to 172–196 (YQRLFHRDSNQTFCWEHWPNQLHKK). Asn181 is a glycosylation site (N-linked (GlcNAc...) asparagine). Residues 197–217 (AYVVCTFVFGYLLPLLLICFC) form a helical membrane-spanning segment. Over 218 to 246 (YAKVLNHLHKKLKNMSKKSEASKKKTAQT) the chain is Cytoplasmic. The chain crosses the membrane as a helical span at residues 247–267 (VLVVVVVFGISWLPHHVIHLW). The Extracellular portion of the chain corresponds to 268–269 (AE). Residues 270–290 (FGAFPLTPASFFFRITAHCLA) traverse the membrane as a helical segment. Residues 291-346 (YSNSSVNPIIYAFLSENFRKAYKQVFKCRVCNESPHGDAKEKNRIDTPPSTNCTHV) are Cytoplasmic-facing. A lipid anchor (S-palmitoyl cysteine) is attached at Cys318. The span at 326-335 (HGDAKEKNRI) shows a compositional bias: basic and acidic residues. A disordered region spans residues 326–346 (HGDAKEKNRIDTPPSTNCTHV).

Belongs to the G-protein coupled receptor 1 family. As to quaternary structure, interacts with GRP39 AND HTR1A. In terms of processing, three cysteine residues are found in the C-terminus, at least one of which may be palmitoylated. Spinal cord, small intestine, Rin14B insulinoma cells and several brain regions, particularly ventral hippocampus, amygdala, supraoptic nucleus, hypothalamus, thalamus, lateral parabrachial nucleus and locus coeruleus.

Its subcellular location is the cell membrane. Functionally, receptor for the hormone galanin. The activity of this receptor is mediated by G proteins that inhibit adenylate cyclase activity. In Rattus norvegicus (Rat), this protein is Galanin receptor type 1 (Galr1).